Reading from the N-terminus, the 342-residue chain is Ferredoxin--NADP reductase (342 aa).

Cys-17, Asp-36, Gln-44, Tyr-49, Ile-89, Phe-124, Asp-289, and Thr-330 together coordinate FAD.

Belongs to the ferredoxin--NADP reductase type 2 family. As to quaternary structure, homodimer. FAD serves as cofactor.

It carries out the reaction 2 reduced [2Fe-2S]-[ferredoxin] + NADP(+) + H(+) = 2 oxidized [2Fe-2S]-[ferredoxin] + NADPH. The polypeptide is Ferredoxin--NADP reductase (Rhodopseudomonas palustris (strain BisB5)).